We begin with the raw amino-acid sequence, 270 residues long: Interleukin-1 beta (270 aa).

The propeptide occupies 1 to 118 (MARVPEPTSE…KCDDNAFVHD (118 aa)).

This sequence belongs to the IL-1 family. Monomer. In its precursor form, weakly interacts with full-length MEFV; the mature cytokine does not interact at all. Interacts with integrins ITGAV:ITGBV and ITGA5:ITGB1; integrin-binding is required for IL1B signaling. Interacts with cargo receptor TMED10; the interaction is direct and is required for the secretion of IL1B mature form. Interacts with HSP90AB1; the interaction facilitates cargo translocation into the ERGIC. Interacts with HSP90B1; the interaction facilitates cargo translocation into the ERGIC.

Its subcellular location is the cytoplasm. It localises to the cytosol. It is found in the secreted. The protein localises to the lysosome. The protein resides in the extracellular exosome. Functionally, potent pro-inflammatory cytokine. Initially discovered as the major endogenous pyrogen, induces prostaglandin synthesis, neutrophil influx and activation, T-cell activation and cytokine production, B-cell activation and antibody production, and fibroblast proliferation and collagen production. Promotes Th17 differentiation of T-cells. Synergizes with IL12/interleukin-12 to induce IFNG synthesis from T-helper 1 (Th1) cells. Plays a role in angiogenesis by inducing VEGF production synergistically with TNF and IL6. Involved in transduction of inflammation downstream of pyroptosis: its mature form is specifically released in the extracellular milieu by passing through the gasdermin-D (GSDMD) pore. The protein is Interleukin-1 beta (IL1B) of Mustela putorius furo (European domestic ferret).